The following is a 226-amino-acid chain: Chalcone--flavanone isomerase 2-A (226 aa).

Substrate is bound by residues T49, N114, and S191.

It belongs to the chalcone isomerase family. As to expression, mostly expressed in flowers, and, to a lower extent, in roots, shoots, and seeds.

The catalysed reaction is a chalcone = a flavanone.. It functions in the pathway secondary metabolite biosynthesis; flavonoid biosynthesis. Catalyzes the intramolecular cyclization of bicyclic chalcones into tricyclic (S)-flavanones. Responsible for the isomerization of 4,2',4',6'-tetrahydroxychalcone (also termed chalcone) into naringenin. The sequence is that of Chalcone--flavanone isomerase 2-A (CHI2-A) from Glycine max (Soybean).